Here is a 257-residue protein sequence, read N- to C-terminus: Acetylglutamate kinase (257 aa).

Substrate-binding positions include 43 to 44, Arg65, and Asn157; that span reads GG. Residues 180 to 185 and 208 to 210 contribute to the ATP site; these read DVSGIL and IIT.

It belongs to the acetylglutamate kinase family. ArgB subfamily. In terms of assembly, homodimer.

Its subcellular location is the cytoplasm. It carries out the reaction N-acetyl-L-glutamate + ATP = N-acetyl-L-glutamyl 5-phosphate + ADP. It participates in amino-acid biosynthesis; L-arginine biosynthesis; N(2)-acetyl-L-ornithine from L-glutamate: step 2/4. In terms of biological role, catalyzes the ATP-dependent phosphorylation of N-acetyl-L-glutamate. This chain is Acetylglutamate kinase, found in Salmonella paratyphi A (strain AKU_12601).